We begin with the raw amino-acid sequence, 115 residues long: Nitrogenase-stabilizing/protective protein NifW (115 aa).

Belongs to the NifW family. As to quaternary structure, homotrimer; associates with NifD.

In terms of biological role, may protect the nitrogenase Fe-Mo protein from oxidative damage. This is Nitrogenase-stabilizing/protective protein NifW from Methylobacterium sp. (strain 4-46).